Reading from the N-terminus, the 392-residue chain is Protein NolC (392 aa).

The J domain occupies 2–71; sequence KRDLYETLGV…RAAYDRYGHA (70 aa). Disordered stretches follow at residues 103–142 and 157–244; these read RRDDGRRSSAPLLGRSRTRCGPSLQHGDHPRGGLFRQDGA and LGRE…TGLR. The span at 157-170 shows a compositional bias: basic and acidic residues; that stretch reads LGREAGHQPEDLRH. Residues 171–185 show a composition bias toward low complexity; it reads LPGLRPYPRRPGLLL. A compositionally biased stretch (basic and acidic residues) spans 186 to 203; that stretch reads DRTHLPDLRRSRSDDHRS. Residues 227–241 show a composition bias toward basic residues; that stretch reads HRGRHAYPPLRRGRT.

The protein is Protein NolC (nolC) of Rhizobium fredii (Sinorhizobium fredii).